Reading from the N-terminus, the 101-residue chain is Urease subunit beta (101 aa).

The protein belongs to the urease beta subunit family. In terms of assembly, heterotrimer of UreA (gamma), UreB (beta) and UreC (alpha) subunits. Three heterotrimers associate to form the active enzyme.

It is found in the cytoplasm. It catalyses the reaction urea + 2 H2O + H(+) = hydrogencarbonate + 2 NH4(+). It functions in the pathway nitrogen metabolism; urea degradation; CO(2) and NH(3) from urea (urease route): step 1/1. This chain is Urease subunit beta, found in Pseudomonas fluorescens (strain SBW25).